Consider the following 593-residue polypeptide: Sodium-independent sulfate anion transporter (593 aa).

At 1 to 34 (MAPDTCCCSATALRRRLPVLAWVPDYSLQWLRLD) the chain is on the extracellular side. The helical transmembrane segment at 35 to 55 (FIAGLSVGLTVIPQALAYAEV) threads the bilayer. Residue Ala56 is a topological domain, cytoplasmic. The helical transmembrane segment at 57–77 (GLPPQYGLYSAFMGCFVYFFL) threads the bilayer. Over 78–82 (GTSRD) the chain is Extracellular. The chain crosses the membrane as a helical span at residues 83–100 (VTLGPTAIMSLLVSFYTF). Residues 101–106 (REPAYA) are Cytoplasmic-facing. Residues 107–127 (VLLAFLSGCIQLAMGLLHLGF) form a helical membrane-spanning segment. Topologically, residues 128 to 176 (LLDFISCPVIKGFTSAASITIGFGQIKNLLGLQKIPRQFFLQVYHTFLH) are extracellular. Residues 177–197 (IGETRVGDAVLGLASMLLLLV) traverse the membrane as a helical segment. At 198-233 (LKCMREHMPPPHPEMPLAVKFSRGLVWTVTTARNAL) the chain is on the cytoplasmic side. A helical membrane pass occupies residues 234-254 (VVSSAALIAYAFEVTGSHPFV). Over 255-287 (LTGKIAEGLPPVRIPPFSVTRDNKTISFSEMVQ) the chain is Extracellular. The chain crosses the membrane as a helical span at residues 288 to 308 (DMGAGLAVVPLMGLLESIAVA). At 309–324 (KSFASQNNYRIDANQE) the chain is on the cytoplasmic side. The chain crosses the membrane as a helical span at residues 325–345 (LLAIGLTNVLGSLVSSYPVTG). Topologically, residues 346–361 (SFGRTAVNAQTGVCTP) are extracellular. Residues 362 to 382 (AGGLVTGALVLLSLNYLTSLF) traverse the membrane as a helical segment. A topological domain (cytoplasmic) is located at residue Ser383. A helical membrane pass occupies residues 384 to 404 (YIPKSALAAVIITAVTPLFDV). Residues 405 to 417 (KIFRSLWRVQRLD) lie on the Extracellular side of the membrane. The chain crosses the membrane as a helical span at residues 418-438 (LLPLCVTFLLSFWEIQYGILA). At 439–593 (GSLVSLLILL…SSLLKSPSGP (155 aa)) the chain is on the cytoplasmic side. In terms of domain architecture, STAS spans 453-566 (RPKTQVSEGQ…EEAEKFLQQE (114 aa)). Residues 564–593 (QQEPGTEPNSIHEDAVPEQRSSLLKSPSGP) are disordered. Polar residues predominate over residues 582–593 (QRSSLLKSPSGP).

Belongs to the SLC26A/SulP transporter (TC 2.A.53) family. In terms of tissue distribution, abundantly expressed in the cerebellum, with a predominant expression in Purkinje cells (at protein level). Predominantly expressed in the kidney and brain. In the kidney localizes in collecting duct intercalated cells (at protein level). As to expression, predominantly expressed in the brain with lower levels in the kidney.

Its subcellular location is the cell membrane. It is found in the lysosome membrane. It localises to the apical cell membrane. The protein resides in the basolateral cell membrane. The enzyme catalyses hydrogencarbonate(in) + chloride(out) = hydrogencarbonate(out) + chloride(in). It catalyses the reaction sulfate(in) + H(+)(in) = sulfate(out) + H(+)(out). It carries out the reaction oxalate(in) + chloride(out) = oxalate(out) + chloride(in). Sodium-independent anion exchanger mediating bicarbonate, chloride, sulfate and oxalate transport. Exhibits sodium-independent sulfate anion transporter activity that may cooperate with SLC26A2 to mediate DIDS-sensitive sulfate uptake into high endothelial venules endothelial cells (HEVEC). In the kidney, mediates chloride-bicarbonate exchange, facilitating V-ATPase-mediated acid secretion. May function as a chloride channel, playing an important role in moderating chloride homeostasis and neuronal activity in the cerebellum. The polypeptide is Sodium-independent sulfate anion transporter (Mus musculus (Mouse)).